The sequence spans 950 residues: F-box only protein 10 (950 aa).

Residues 1-48 (METGGLPLELWRMILAYLHLPDLGRCSLVCRAWYELILSLDSTRWRQL) form the F-box domain. PbH1 repeat units lie at residues 198–217 (SGHI…QVHG) and 238–260 (VPLC…TVEG). The disordered stretch occupies residues 313-364 (IEGSQSPTSPVCSSPKPGSKEAEVGSDGERVAQTPDSSDGGLSPSGEDEDDE). Polar residues predominate over residues 315–324 (GSQSPTSPVC). 2 positions are modified to phosphoserine: Ser321 and Ser326. Over residues 330-342 (GSKEAEVGSDGER) the composition is skewed to basic and acidic residues. Low complexity predominate over residues 347–357 (PDSSDGGLSPS). 15 PbH1 repeats span residues 423 to 444 (VQGC…FVCS), 467 to 489 (NSKI…FLRL), 490 to 512 (EGGG…DIRK), 513 to 535 (KSNP…VVLG), 536 to 558 (NGKG…YILY), 559 to 581 (HGNP…AVNE), 582 to 604 (NGKG…DIRR), 605 to 627 (GGVP…VVGD), 628 to 650 (EGKG…WMMS), 651 to 673 (SSLP…AVFS), 713 to 735 (ITVA…FVQS), 736 to 758 (SEAL…TIVQ), 760 to 782 (SQLT…KVEF), 783 to 805 (QCKV…ITKG), and 828 to 850 (RSDT…AVRG).

As to quaternary structure, component of the SCF(FBXO10) complex consisting of CUL1, SKP1 and FBXO10. Interacts with BCL2. Interacts with PRDM1. As to expression, particularly highly expressed in B-cells.

The protein resides in the cytoplasm. The protein operates within protein modification; protein ubiquitination. Functionally, substrate-recognition component of the SCF (SKP1-CUL1-F-box protein)-type E3 ubiquitin ligase complex. Mediates the ubiquitination and degradation of BCL2, an antiapoptotic protein, thereby playing a role in apoptosis by controlling the stability of BCL2. Targets also the receptor for advanced glycation end products RAGE for ubiquitination and subsequent lysosomal degradation. Directly controls HGAL/GCSAM ubiquitination and degradation and thereby decreases BCR signaling. The chain is F-box only protein 10 (Fbxo10) from Mus musculus (Mouse).